Reading from the N-terminus, the 243-residue chain is Thaumatin-like protein (243 aa).

The N-terminal stretch at methionine 1 to alanine 20 is a signal peptide. Intrachain disulfides connect cysteine 29-cysteine 238, cysteine 77-cysteine 87, cysteine 92-cysteine 98, cysteine 144-cysteine 228, cysteine 149-cysteine 211, cysteine 157-cysteine 174, cysteine 178-cysteine 187, and cysteine 188-cysteine 198.

The protein belongs to the thaumatin family.

This Arabidopsis thaliana (Mouse-ear cress) protein is Thaumatin-like protein.